The following is a 314-amino-acid chain: Basic endochitinase (314 aa).

The first 20 residues, 1–20 (MGLWALVAFCLLSLILVGSA), serve as a signal peptide directing secretion. Positions 21 to 61 (EQCGGQAGGRVCPGGACCSKFGWCGNTADYCGSGCQSQCSS) constitute a Chitin-binding type-1 domain. Cystine bridges form between cysteine 23–cysteine 38, cysteine 32–cysteine 44, cysteine 37–cysteine 51, cysteine 55–cysteine 59, cysteine 86–cysteine 148, cysteine 160–cysteine 168, and cysteine 267–cysteine 299. The Proton donor role is filled by glutamate 130.

It belongs to the glycosyl hydrolase 19 family. Chitinase class I subfamily.

The enzyme catalyses Random endo-hydrolysis of N-acetyl-beta-D-glucosaminide (1-&gt;4)-beta-linkages in chitin and chitodextrins.. Functionally, defense against chitin-containing fungal pathogens. In Vitis vinifera (Grape), this protein is Basic endochitinase (CHIT1B).